Reading from the N-terminus, the 375-residue chain is UDP-N-acetylglucosamine--N-acetylmuramyl-(pentapeptide) pyrophosphoryl-undecaprenol N-acetylglucosamine transferase (375 aa).

Residues 15 to 17, N126, R169, S197, and Q298 contribute to the UDP-N-acetyl-alpha-D-glucosamine site; that span reads TGG.

The protein belongs to the glycosyltransferase 28 family. MurG subfamily.

Its subcellular location is the cell inner membrane. It carries out the reaction di-trans,octa-cis-undecaprenyl diphospho-N-acetyl-alpha-D-muramoyl-L-alanyl-D-glutamyl-meso-2,6-diaminopimeloyl-D-alanyl-D-alanine + UDP-N-acetyl-alpha-D-glucosamine = di-trans,octa-cis-undecaprenyl diphospho-[N-acetyl-alpha-D-glucosaminyl-(1-&gt;4)]-N-acetyl-alpha-D-muramoyl-L-alanyl-D-glutamyl-meso-2,6-diaminopimeloyl-D-alanyl-D-alanine + UDP + H(+). Its pathway is cell wall biogenesis; peptidoglycan biosynthesis. Its function is as follows. Cell wall formation. Catalyzes the transfer of a GlcNAc subunit on undecaprenyl-pyrophosphoryl-MurNAc-pentapeptide (lipid intermediate I) to form undecaprenyl-pyrophosphoryl-MurNAc-(pentapeptide)GlcNAc (lipid intermediate II). In Rhodopseudomonas palustris (strain BisB18), this protein is UDP-N-acetylglucosamine--N-acetylmuramyl-(pentapeptide) pyrophosphoryl-undecaprenol N-acetylglucosamine transferase.